Consider the following 278-residue polypeptide: MTNQAPIPVIVNGAAGKMGREVVKAIAQAPDLNLLGAIDSSPEHQGKDAGELAGLSEPLEVPITNQLEPMLGYVAGERQGPPGVIVDFTHPDSVYDNVRSAIAYGIRPVVGTTGLSPAQIQNLADFAEKASTGCLIIPNFSIGMVLLQQAAVTASQYFDHVEIIELHHNQKADAPSGTAIQTAELLAELGKTFNSAIVEETEKIPGARGSLAGEGIRIHSVRLPGLIAHQEVIFGAPGQIYTLRHDTSDRACYMPGVLLAIRKVLQLKSLVYGLEKIL.

NAD(+)-binding positions include 13-18 (GAAGKM) and 111-113 (GTT). H167 serves as the catalytic Proton donor/acceptor. Residue H168 participates in (S)-2,3,4,5-tetrahydrodipicolinate binding. Residue K171 is the Proton donor of the active site. 177-178 (GT) provides a ligand contact to (S)-2,3,4,5-tetrahydrodipicolinate.

Belongs to the DapB family.

Its subcellular location is the cytoplasm. It catalyses the reaction (S)-2,3,4,5-tetrahydrodipicolinate + NAD(+) + H2O = (2S,4S)-4-hydroxy-2,3,4,5-tetrahydrodipicolinate + NADH + H(+). It carries out the reaction (S)-2,3,4,5-tetrahydrodipicolinate + NADP(+) + H2O = (2S,4S)-4-hydroxy-2,3,4,5-tetrahydrodipicolinate + NADPH + H(+). Its pathway is amino-acid biosynthesis; L-lysine biosynthesis via DAP pathway; (S)-tetrahydrodipicolinate from L-aspartate: step 4/4. Functionally, catalyzes the conversion of 4-hydroxy-tetrahydrodipicolinate (HTPA) to tetrahydrodipicolinate. This chain is 4-hydroxy-tetrahydrodipicolinate reductase, found in Trichormus variabilis (strain ATCC 29413 / PCC 7937) (Anabaena variabilis).